The sequence spans 370 residues: Dual-specificity RNA methyltransferase RlmN (370 aa).

Glu-93 (proton acceptor) is an active-site residue. In terms of domain architecture, Radical SAM core spans 99-337 (EEGRGTLCVS…VTTVRKTRGD (239 aa)). Cys-106 and Cys-343 are oxidised to a cystine. 3 residues coordinate [4Fe-4S] cluster: Cys-113, Cys-117, and Cys-120. S-adenosyl-L-methionine contacts are provided by residues 167 to 168 (GE), Ser-199, 221 to 223 (SLH), and Asn-300. The active-site S-methylcysteine intermediate is Cys-343.

Belongs to the radical SAM superfamily. RlmN family. [4Fe-4S] cluster serves as cofactor.

The protein resides in the cytoplasm. The enzyme catalyses adenosine(2503) in 23S rRNA + 2 reduced [2Fe-2S]-[ferredoxin] + 2 S-adenosyl-L-methionine = 2-methyladenosine(2503) in 23S rRNA + 5'-deoxyadenosine + L-methionine + 2 oxidized [2Fe-2S]-[ferredoxin] + S-adenosyl-L-homocysteine. The catalysed reaction is adenosine(37) in tRNA + 2 reduced [2Fe-2S]-[ferredoxin] + 2 S-adenosyl-L-methionine = 2-methyladenosine(37) in tRNA + 5'-deoxyadenosine + L-methionine + 2 oxidized [2Fe-2S]-[ferredoxin] + S-adenosyl-L-homocysteine. Specifically methylates position 2 of adenine 2503 in 23S rRNA and position 2 of adenine 37 in tRNAs. m2A2503 modification seems to play a crucial role in the proofreading step occurring at the peptidyl transferase center and thus would serve to optimize ribosomal fidelity. This Francisella tularensis subsp. holarctica (strain FTNF002-00 / FTA) protein is Dual-specificity RNA methyltransferase RlmN.